The sequence spans 156 residues: MKTFEGKLVSEKPIKIGIVCARFNEFIVSKLLGGALDALSRHNIKDDDITVAWVPGAFEIPLIASKMAKSKKYDAVVCLGAVIRGSTTHYDYVCAEVSKGIANVSLNSDIPVMFGVLTTENIEQAIERAGTKAGNKGFDSAMAAIEMVNLIREIEK.

Residues phenylalanine 23, 57–59 (AFE), and 81–83 (AVI) each bind 5-amino-6-(D-ribitylamino)uracil. (2S)-2-hydroxy-3-oxobutyl phosphate is bound at residue 86 to 87 (ST). Histidine 89 serves as the catalytic Proton donor. Phenylalanine 114 contacts 5-amino-6-(D-ribitylamino)uracil. Arginine 128 provides a ligand contact to (2S)-2-hydroxy-3-oxobutyl phosphate.

The protein belongs to the DMRL synthase family.

It carries out the reaction (2S)-2-hydroxy-3-oxobutyl phosphate + 5-amino-6-(D-ribitylamino)uracil = 6,7-dimethyl-8-(1-D-ribityl)lumazine + phosphate + 2 H2O + H(+). Its pathway is cofactor biosynthesis; riboflavin biosynthesis; riboflavin from 2-hydroxy-3-oxobutyl phosphate and 5-amino-6-(D-ribitylamino)uracil: step 1/2. Its function is as follows. Catalyzes the formation of 6,7-dimethyl-8-ribityllumazine by condensation of 5-amino-6-(D-ribitylamino)uracil with 3,4-dihydroxy-2-butanone 4-phosphate. This is the penultimate step in the biosynthesis of riboflavin. This chain is 6,7-dimethyl-8-ribityllumazine synthase, found in Brachyspira hyodysenteriae (strain ATCC 49526 / WA1).